A 650-amino-acid polypeptide reads, in one-letter code: Chaperone protein DnaK (650 aa).

At threonine 200 the chain carries Phosphothreonine; by autocatalysis. The span at 612-636 (QQAGAAGAAGAAEGAAHAGGAQQAA) shows a compositional bias: low complexity. The segment at 612–650 (QQAGAAGAAGAAEGAAHAGGAQQAADDVVDAEFKEVKKD) is disordered.

This sequence belongs to the heat shock protein 70 family.

Functionally, acts as a chaperone. The polypeptide is Chaperone protein DnaK (Burkholderia ambifaria (strain ATCC BAA-244 / DSM 16087 / CCUG 44356 / LMG 19182 / AMMD) (Burkholderia cepacia (strain AMMD))).